We begin with the raw amino-acid sequence, 472 residues long: MRPFIHDDFLLHTDAARDLYHSFAKAEPIFDYHCHLPQQQILENHQFADLAEIWLGGDHYKWRAMRANGVKERFCTGAATPREKFDAWVGAVPHTLRNPLYHWSHLELARYFGIFDLINQKSADKIWREANEKLATMRVHDILAANKVAVICTTDDPADSLEQHEKIKKLGIKTRVYPTFRPDKALNVGSPAAYNAWLEKLAGAAKTKIASFDDFLSALKKRHDDFHAIGGRLSDHGMENCYAEPCTATEAQAIFDAARAGRAASVADQAKFASFMMLEFGRWDAKKGWTKQLHLGALRNNNTRLLATLGPDTGFDSIGDFPQTRALSRYLDTLDSTDELPRTVLYNLNPADNYAFATMIGNFQDGSVPGKMQFGSGWWFLDQKEAMEWQMNALSNQGLLSRFVGMLTDSRSFLSYTRHEYFRRTLCNLIGAEMERGEIPNDRELVGPMVRRICFANAREYFRLELDPSFRG.

It belongs to the metallo-dependent hydrolases superfamily. Uronate isomerase family.

The enzyme catalyses D-glucuronate = D-fructuronate. The catalysed reaction is aldehydo-D-galacturonate = keto-D-tagaturonate. Its pathway is carbohydrate metabolism; pentose and glucuronate interconversion. In Opitutus terrae (strain DSM 11246 / JCM 15787 / PB90-1), this protein is Uronate isomerase.